The following is a 358-amino-acid chain: uncharacterized protein (358 aa).

This is an uncharacterized protein from Klebsiella pneumoniae.